Here is a 2617-residue protein sequence, read N- to C-terminus: Non-reducing polyketide synthase epaA (2617 aa).

The tract at residues 95 to 231 (PNILLSPMVV…AARSISSLQQ (137 aa)) is N-terminal acylcarrier protein transacylase domain (SAT). Cys-132 acts as the Nucleophile; for transacylase activity in catalysis. The Proton donor/acceptor; for transacylase activity role is filled by His-250. The Ketosynthase family 3 (KS3) domain occupies 372 to 790 (PNEIAVIGMS…GSNASMVVAQ (419 aa)). Active-site for beta-ketoacyl synthase activity residues include Cys-539, His-674, and His-713. The tract at residues 902–1193 (FGGQISNYVG…ITSMASRALG (292 aa)) is malonyl-CoA:ACP transacylase (MAT) domain. Residues 1282-1413 (PKTLWSLIEA…GKLAFLSGQD (132 aa)) form an N-terminal hotdog fold region. The 310-residue stretch at 1282 to 1591 (PKTLWSLIEA…YHKVAKASMS (310 aa)) folds into the PKS/mFAS DH domain. Positions 1310–1589 (LVSGHVIANT…INYHKVAKAS (280 aa)) are product template (PT) domain. Residue His-1314 is the Proton acceptor; for dehydratase activity of the active site. Residues 1443-1591 (ADDIIQGRNI…YHKVAKASMS (149 aa)) are C-terminal hotdog fold. Catalysis depends on Asp-1499, which acts as the Proton donor; for dehydratase activity. Positions 1600–1651 (TEAAPSSSTRAHPTSSSSPRLPGPSVPEDKSQNETQPAGTNAVAKKKSEKSA) are disordered. The span at 1602 to 1619 (AAPSSSTRAHPTSSSSPR) shows a compositional bias: low complexity. In terms of domain architecture, Carrier spans 1653 to 1727 (QNVLEKTRAL…GLVEYVQSAV (75 aa)). Ser-1687 is subject to O-(pantetheine 4'-phosphoryl)serine. Residues 1728–1799 (GVPTNGDEPD…PAMPPASSKT (72 aa)) are disordered. The span at 1750 to 1766 (LAPSPSSSSSSTNLTED) shows a compositional bias: low complexity. Residues 1769–1785 (LDQAETTTNISSYPGQT) are compositionally biased toward polar residues. Residues 1970–2158 (DSLLNKLSYR…VGYGQVDWTD (189 aa)) form a methyltransferase domain region. The NADPH-binding (R) domain stretch occupies residues 2240-2485 (ITGATGSLGV…LCWTPVNDVA (246 aa)).

Pantetheine 4'-phosphate serves as cofactor.

The protein operates within secondary metabolite biosynthesis. In terms of biological role, non-reducing polyketide synthase; part of the gene cluster that mediates the biosynthesis of nigerpyrone and its derivatives carbonarone A and pestalamide A. The biosynthesis pathway begins with the polyketide assembly by epaA to form phenylacetyl triketide precursor from successive condensation of two malonyl-CoA, presumably with one phenylacetyl-CoA starter unit produced by the phenylacetyl-CoA ligase epaB. For the nigerpyrone biosynthesis, the reactive polyketide chain is released as an aldehyde through the R-domain. A nonenzymatic cyclization and dehydration may create nigerpyrone. For the biosynthesis of carbonarone A and pestalamide A, an extra methyl group is added through the C-methyltransferase domain. Several further steps involving the dehydrogenase orf1, the cytochrome P450 monooxygenase orf2 and the FAD-dependent monooxygenase orf3 are required to form a carbonarone A precursor which is converted to carbonarone A via cyclization. The O-acetyltransferase epaC could catalyze the transfer of 2-methylsuccinyl-CoA, a common intermediate in the ethylmalonyl-CoA pathway, to generate the final product pestalamide A. The protein is Non-reducing polyketide synthase epaA of Aspergillus niger (strain ATCC MYA-4892 / CBS 513.88 / FGSC A1513).